Consider the following 551-residue polypeptide: Chaperonin GroEL 2 (551 aa).

Residues 30–33, K51, 87–91, G415, and D496 contribute to the ATP site; these read TLGP and DGTTT.

This sequence belongs to the chaperonin (HSP60) family. In terms of assembly, forms a cylinder of 14 subunits composed of two heptameric rings stacked back-to-back. Interacts with the co-chaperonin GroES.

The protein resides in the cytoplasm. It catalyses the reaction ATP + H2O + a folded polypeptide = ADP + phosphate + an unfolded polypeptide.. In terms of biological role, together with its co-chaperonin GroES, plays an essential role in assisting protein folding. The GroEL-GroES system forms a nano-cage that allows encapsulation of the non-native substrate proteins and provides a physical environment optimized to promote and accelerate protein folding. The protein is Chaperonin GroEL 2 of Rhodopseudomonas palustris (strain BisB18).